A 301-amino-acid polypeptide reads, in one-letter code: MGFVKVLKTKAYFKRFQTKYRRRREGLTDYYARKRLIIQDKDKYNTPKYRLVARATNTRIIAQIVYATLKCDRVLCAADSYELKRFGVSTGLASYAAAYATGLLLARRLLKQIGLDTVYAGQTKVDGAYFNVDEDQKEKKPFKAILDAGLVRTTTGNRVFGVLKGACDGGINIPHSESRFPGYVRASDEGESSKYKPEDHKARIFGKHIDAYMKHLKGQSNEAFQKQFSKWSKTLEAAKVDSVEKLFTKVHAEIRKNPERVKSTKKNDKPKRDHKKFYPTKLTAAQRKDRVKTKFQLALSQ.

The segment covering Asn257 to Lys271 has biased composition (basic and acidic residues). The segment at Asn257 to Thr283 is disordered.

The protein belongs to the universal ribosomal protein uL18 family. As to quaternary structure, component of the large ribosomal subunit (LSU).

It is found in the cytoplasm. The protein resides in the nucleus. Its function is as follows. Component of the ribosome, a large ribonucleoprotein complex responsible for the synthesis of proteins in the cell. The small ribosomal subunit (SSU) binds messenger RNAs (mRNAs) and translates the encoded message by selecting cognate aminoacyl-transfer RNA (tRNA) molecules. The large subunit (LSU) contains the ribosomal catalytic site termed the peptidyl transferase center (PTC), which catalyzes the formation of peptide bonds, thereby polymerizing the amino acids delivered by tRNAs into a polypeptide chain. The nascent polypeptides leave the ribosome through a tunnel in the LSU and interact with protein factors that function in enzymatic processing, targeting, and the membrane insertion of nascent chains at the exit of the ribosomal tunnel. In Tetrahymena thermophila (strain SB210), this protein is Large ribosomal subunit protein uL18 (RPL5).